Consider the following 327-residue polypeptide: Homeotic protein distal-less (327 aa).

The segment at residues 124-183 (MRKPRTIYSSLQLQQLNRRFQRTQYLALPERAELAASLGLTQTQVKIWFQNRRSKYKKMM) is a DNA-binding region (homeobox). The tract at residues 181 to 303 (KMMKAAQGPG…THHHNPPPQM (123 aa)) is disordered. The span at 231–249 (LPPGHSPTPSSTPVSELSP) shows a compositional bias: low complexity. Over residues 266–275 (QKPHWIDHKP) the composition is skewed to basic and acidic residues. The segment covering 276–286 (PPQMTPQPPHP) has biased composition (pro residues).

Expressed in the embryo in limb primordia of the head and thoracic segments. Expressed in regions of the larval leg, wing, antennal and haltere disks that form the distal-most regions of the mature structures (in the leg this corresponds to the tarsus and the distal tibia). Found in the optic center of the developing larval brain.

It is found in the nucleus. In terms of biological role, transcription factor that plays a role in larval and adult appendage development. Specifies the identity of ventral appendages (including legs and antennae) and suppresses dorsal appendage development. Involved in patterning the distal-proximal limb axis. May control the adhesive properties of cells during limb morphogenesis. Also has a secondary role in the normal patterning of the wing margin. The protein is Homeotic protein distal-less (Dll) of Drosophila melanogaster (Fruit fly).